Here is a 365-residue protein sequence, read N- to C-terminus: Transcription factor MYB93 (365 aa).

2 consecutive HTH myb-type domains span residues 9-61 (ENGL…TNYL) and 62-116 (RPDI…KKKL). DNA-binding regions (H-T-H motif) lie at residues 37 to 61 (WRAL…TNYL) and 89 to 112 (WSAI…NTHL).

Interacts with FBX5.

Its subcellular location is the nucleus. It localises to the cytoplasm. Its function is as follows. Transcription factor that acts as a negative regulator of lateral root (LR) development. Required for normal auxin responses during LR development. May be part of a negative feedback loop stimulated specifically in the endodermis upon LR initiation to ensure that LRs are formed only in the correct place. The polypeptide is Transcription factor MYB93 (Arabidopsis thaliana (Mouse-ear cress)).